Here is a 157-residue protein sequence, read N- to C-terminus: Small ribosomal subunit protein uS7 (157 aa).

The protein belongs to the universal ribosomal protein uS7 family. As to quaternary structure, part of the 30S ribosomal subunit. Contacts proteins S9 and S11.

In terms of biological role, one of the primary rRNA binding proteins, it binds directly to 16S rRNA where it nucleates assembly of the head domain of the 30S subunit. Is located at the subunit interface close to the decoding center, probably blocks exit of the E-site tRNA. The sequence is that of Small ribosomal subunit protein uS7 from Chlamydia trachomatis serovar A (strain ATCC VR-571B / DSM 19440 / HAR-13).